A 330-amino-acid polypeptide reads, in one-letter code: Ribosomal RNA large subunit methyltransferase F (330 aa).

It belongs to the methyltransferase superfamily. METTL16/RlmF family.

The protein localises to the cytoplasm. The enzyme catalyses adenosine(1618) in 23S rRNA + S-adenosyl-L-methionine = N(6)-methyladenosine(1618) in 23S rRNA + S-adenosyl-L-homocysteine + H(+). Specifically methylates the adenine in position 1618 of 23S rRNA. This is Ribosomal RNA large subunit methyltransferase F from Pseudoalteromonas atlantica (strain T6c / ATCC BAA-1087).